The primary structure comprises 1766 residues: E3 ubiquitin-protein ligase listerin (1766 aa).

Residues 1–11 show a composition bias toward basic residues; the sequence is MGGKNKQRTKG. Residues 1-20 are disordered; it reads MGGKNKQRTKGNVRPSSSGR. HEAT repeat units lie at residues 100–138, 193–231, 292–329, 335–372, and 512–549; these read KGVL…KVKK, VLQD…SLLA, AEAP…TIED, NARK…KVPP, and EKTL…DEDE. Positions 529-567 are disordered; that stretch reads KTATKPNNRKSLKVKFSDEDESERNTENGKITEVRSNSD. Basic and acidic residues predominate over residues 551-566; it reads ERNTENGKITEVRSNS. 6 HEAT repeats span residues 606-644, 672-710, 916-953, 1184-1227, 1314-1355, and 1406-1447; these read EQHL…ESQE, KDMH…KWIV, QVLI…NRTE, HLLP…MIRY, GIHN…YISK, and SKLM…TQEL. Residues 1715–1762 form an RING-type zinc finger; sequence CMICFSVIHGSNYSLPKKACRTCKKKFHSACLYKWFTSSNKSTCPLCR.

This sequence belongs to the LTN1 family. Component of the ribosome quality control complex (RQC), composed of at least the E3 ubiquitin ligase LTN1 and NEMF associated with the 60S ribosomal subunit. The complex probably also contains TCF25 as well as VCP/p97 and its ubiquitin-binding cofactors.

Its subcellular location is the cytoplasm. The protein localises to the cytosol. The catalysed reaction is S-ubiquitinyl-[E2 ubiquitin-conjugating enzyme]-L-cysteine + [acceptor protein]-L-lysine = [E2 ubiquitin-conjugating enzyme]-L-cysteine + N(6)-ubiquitinyl-[acceptor protein]-L-lysine.. The protein operates within protein modification; protein ubiquitination. Its function is as follows. E3 ubiquitin-protein ligase component of the ribosome quality control complex (RQC), a ribosome-associated complex that mediates ubiquitination and extraction of incompletely synthesized nascent chains for proteasomal degradation. Within the RQC complex, LTN1 is recruited to stalled 60S ribosomal subunits by NEMF and mediates ubiquitination of stalled nascent chains. Ubiquitination leads to VCP/p97 recruitment for extraction and degradation of the incomplete translation product. In Gallus gallus (Chicken), this protein is E3 ubiquitin-protein ligase listerin (LTN1).